We begin with the raw amino-acid sequence, 226 residues long: 7-cyano-7-deazaguanine synthase (226 aa).

Leucine 7–threonine 17 lines the ATP pocket. Positions 187, 195, 198, and 201 each coordinate Zn(2+).

It belongs to the QueC family. Zn(2+) serves as cofactor.

The catalysed reaction is 7-carboxy-7-deazaguanine + NH4(+) + ATP = 7-cyano-7-deazaguanine + ADP + phosphate + H2O + H(+). The protein operates within purine metabolism; 7-cyano-7-deazaguanine biosynthesis. Its function is as follows. Catalyzes the ATP-dependent conversion of 7-carboxy-7-deazaguanine (CDG) to 7-cyano-7-deazaguanine (preQ(0)). The polypeptide is 7-cyano-7-deazaguanine synthase (Chlorobium phaeobacteroides (strain DSM 266 / SMG 266 / 2430)).